Reading from the N-terminus, the 174-residue chain is Keratin-associated protein 1-5 (174 aa).

The segment at 3–172 (CCQTSFCGYP…CCRPVCCCEP (170 aa)) is 15 X 5 AA repeats of C-C-[QEPVRC]-[TPIVLE]-[SRHVP].

It belongs to the KRTAP type 1 family. Interacts with hair keratins. In terms of tissue distribution, expressed in the middle/upper portions of the hair cortex, in the region termed the keratogenous zone.

In terms of biological role, in the hair cortex, hair keratin intermediate filaments are embedded in an interfilamentous matrix, consisting of hair keratin-associated proteins (KRTAP), which are essential for the formation of a rigid and resistant hair shaft through their extensive disulfide bond cross-linking with abundant cysteine residues of hair keratins. The matrix proteins include the high-sulfur and high-glycine-tyrosine keratins. In Homo sapiens (Human), this protein is Keratin-associated protein 1-5 (KRTAP1-5).